Here is a 206-residue protein sequence, read N- to C-terminus: Large ribosomal subunit protein uL4 (206 aa).

Belongs to the universal ribosomal protein uL4 family. Part of the 50S ribosomal subunit.

Functionally, one of the primary rRNA binding proteins, this protein initially binds near the 5'-end of the 23S rRNA. It is important during the early stages of 50S assembly. It makes multiple contacts with different domains of the 23S rRNA in the assembled 50S subunit and ribosome. In terms of biological role, forms part of the polypeptide exit tunnel. The chain is Large ribosomal subunit protein uL4 from Rhodopseudomonas palustris (strain BisB18).